The primary structure comprises 271 residues: MLKIAETEFGSRLFTGTGKFASGKLMQEAIAASGSELVTLAMKRVDFKTGSDDILAPLLSRGVRLLPNTSGARNAKEAIFAAELAREMLGTEWLKLEIHPDPKYLMPDPMETFAAAKELVSQGFKVLPYVHADPVLCRRLEEIGCAAVMPLGSPIGSNQGLVSREFLKIIIEQASIPVVVDAGIGAPSHACEAMELGADAVLVNTAIASSADPVRMARAFALAVQIGREAYLAGLGSKSLHAHETSPLTGFLNTGLSTTGLVDSGMAEKLL.

Lys95 serves as the catalytic Schiff-base intermediate with DXP. Residues Gly156, 182 to 183 (AG), and 204 to 205 (NT) contribute to the 1-deoxy-D-xylulose 5-phosphate site.

It belongs to the ThiG family. In terms of assembly, homotetramer. Forms heterodimers with either ThiH or ThiS.

Its subcellular location is the cytoplasm. It catalyses the reaction [ThiS sulfur-carrier protein]-C-terminal-Gly-aminoethanethioate + 2-iminoacetate + 1-deoxy-D-xylulose 5-phosphate = [ThiS sulfur-carrier protein]-C-terminal Gly-Gly + 2-[(2R,5Z)-2-carboxy-4-methylthiazol-5(2H)-ylidene]ethyl phosphate + 2 H2O + H(+). It participates in cofactor biosynthesis; thiamine diphosphate biosynthesis. Functionally, catalyzes the rearrangement of 1-deoxy-D-xylulose 5-phosphate (DXP) to produce the thiazole phosphate moiety of thiamine. Sulfur is provided by the thiocarboxylate moiety of the carrier protein ThiS. In vitro, sulfur can be provided by H(2)S. The sequence is that of Thiazole synthase from Shewanella amazonensis (strain ATCC BAA-1098 / SB2B).